A 543-amino-acid polypeptide reads, in one-letter code: UPF0324 membrane protein RB9488 (543 aa).

A compositionally biased stretch (low complexity) spans Met1 to Asp22. Residues Met1–Leu41 form a disordered region. Residues Trp51–Pro73 form a helical membrane-spanning segment. A disordered region spans residues Val91–Ala120. Transmembrane regions (helical) follow at residues Ile160–Asn182, Ala189–Gly211, Glu221–Leu243, Leu270–Tyr292, Asn307–Cys329, Leu336–Ile358, Gly368–Gly390, Ile403–Phe422, Ile437–Tyr459, Thr479–Thr496, and Leu511–Phe533.

It belongs to the UPF0324 family.

It is found in the cell membrane. The chain is UPF0324 membrane protein RB9488 from Rhodopirellula baltica (strain DSM 10527 / NCIMB 13988 / SH1).